We begin with the raw amino-acid sequence, 220 residues long: MELYLDTSDVVAVTALSRIFPLAGVTTNPSIIAAGKKPLEVVLPQLHEAMGGQGRLFAQVMATTAEGMVNDARKLRSIIADIVVKVPVTAEGLAAIKMLKAEGIPTLGTAVYGAAQGLLSALAGAEYVAPYVNRIDAQGGSGIQTVTDLHQLLKMHAPQAKVLAASFKTPRQALDCLLAGCESITLPLDVAQQMISYPAVDAAVAKFEQDWLGAFGRTSI.

The Schiff-base intermediate with substrate role is filled by lysine 85.

Belongs to the transaldolase family. Type 3A subfamily. In terms of assembly, homodecamer.

The protein localises to the cytoplasm. It carries out the reaction beta-D-fructose 6-phosphate = dihydroxyacetone + D-glyceraldehyde 3-phosphate. Catalyzes the reversible formation of fructose 6-phosphate from dihydroxyacetone and D-glyceraldehyde 3-phosphate via an aldolization reaction. The polypeptide is Fructose-6-phosphate aldolase 1 (fsaA) (Escherichia coli O6:H1 (strain CFT073 / ATCC 700928 / UPEC)).